Reading from the N-terminus, the 253-residue chain is Phosphonates import ATP-binding protein PhnC (253 aa).

The ABC transporter domain occupies Val-4–Gly-247. Gly-36–Ser-43 is an ATP binding site.

It belongs to the ABC transporter superfamily. Phosphonates importer (TC 3.A.1.9.1) family. As to quaternary structure, the complex is composed of two ATP-binding proteins (PhnC), two transmembrane proteins (PhnE) and a solute-binding protein (PhnD).

It is found in the cell membrane. The catalysed reaction is phosphonate(out) + ATP + H2O = phosphonate(in) + ADP + phosphate + H(+). Part of the ABC transporter complex PhnCDE involved in phosphonates import. Responsible for energy coupling to the transport system. The sequence is that of Phosphonates import ATP-binding protein PhnC from Frankia casuarinae (strain DSM 45818 / CECT 9043 / HFP020203 / CcI3).